Reading from the N-terminus, the 432-residue chain is MDEAVGDLKQALPCVAESPTVHVEVHQRGSSTAKKEDINLSVRKLLNRHNIVFGDYTWTEFDEPFLTRNVQSVSIIDTELKVKDSQPIDLSACTVALHIFQLNEDGPSSENLEEETENIIAANHWVLPAAEFHGLWDSLVYDVEVKSHLLDYVMTTLLFSDKNVNSNLITWNRVVLLHGPPGTGKTSLCKALAQKLTIRLSSRYRYGQLIEINSHSLFSKWFSESGKLVTKMFQKIQDLIDDKDALVFVLIDEVESLTAARNACRAGTEPSDAIRVVNAVLTQIDQIKRHSNVVILTTSNITEKIDVAFVDRADIKQYIGPPSAAAIFKIYLSCLEELMKCQIIYPRQQLLTLRELEMIGFIENNVSKLSLLLNDISRKSEGLSGRVLRKLPFLAHALYVQAPTVTIEGFLQALSLAVDKQFEERKKLAAYI.

Methionine 1 carries the post-translational modification N-acetylmethionine. 179–186 (GPPGTGKT) contacts ATP.

It belongs to the AAA ATPase family. PCH2 subfamily. Specifically interacts with the ligand binding domain of the thyroid receptor (TR). This interaction does not require the presence of thyroid hormone for its interaction. Interacts with HPV16 E1. Interacts with proteasome subunit PSMA8; to participate in meiosis progression during spermatogenesis.

Its function is as follows. Plays a key role in chromosome recombination and chromosome structure development during meiosis. Required at early steps in meiotic recombination that leads to non-crossovers pathways. Also needed for efficient completion of homologous synapsis by influencing crossover distribution along the chromosomes affecting both crossovers and non-crossovers pathways. Also required for development of higher-order chromosome structures and is needed for synaptonemal-complex formation. In males, required for efficient synapsis of the sex chromosomes and for sex body formation. Promotes early steps of the DNA double-strand breaks (DSBs) repair process upstream of the assembly of RAD51 complexes. Required for depletion of HORMAD1 and HORMAD2 from synapsed chromosomes. Plays a role in mitotic spindle assembly checkpoint (SAC) activation. The protein is Pachytene checkpoint protein 2 homolog (TRIP13) of Homo sapiens (Human).